Consider the following 218-residue polypeptide: 25 kDa calcium-binding protein (218 aa).

EF-hand domains lie at 24-59, 66-101, 128-163, and 171-206; these read GAKT…AYKS, PSSD…YLTG, AKLD…TYAE, and PTKE…SLQK. Ca(2+) contacts are provided by Asp-37, Arg-43, Asp-48, Asp-79, Asn-81, Asp-83, Asp-90, Asp-141, Asp-143, Ser-145, Gln-147, Glu-152, Asp-184, Asn-186, Asp-188, Ser-190, and Glu-195.

Expected to play a crucial role in calcium-dependent regulation of ciliary movement. The protein is 25 kDa calcium-binding protein of Tetrahymena thermophila.